We begin with the raw amino-acid sequence, 101 residues long: UPF0235 protein Cphamn1_2066 (101 aa).

This sequence belongs to the UPF0235 family.

This Chlorobium phaeobacteroides (strain BS1) protein is UPF0235 protein Cphamn1_2066.